A 424-amino-acid chain; its full sequence is tRNA(Met) cytidine acetate ligase (424 aa).

Residues 7–20, G102, N174, and R199 contribute to the ATP site; that span reads ITEY…HLHH.

The protein belongs to the TmcAL family.

It is found in the cytoplasm. The catalysed reaction is cytidine(34) in elongator tRNA(Met) + acetate + ATP = N(4)-acetylcytidine(34) in elongator tRNA(Met) + AMP + diphosphate. Its function is as follows. Catalyzes the formation of N(4)-acetylcytidine (ac(4)C) at the wobble position of elongator tRNA(Met), using acetate and ATP as substrates. First activates an acetate ion to form acetyladenylate (Ac-AMP) and then transfers the acetyl group to tRNA to form ac(4)C34. This chain is tRNA(Met) cytidine acetate ligase, found in Alkaliphilus metalliredigens (strain QYMF).